Reading from the N-terminus, the 314-residue chain is UPF0761 membrane protein VIBHAR_00593 (314 aa).

A run of 6 helical transmembrane segments spans residues 41–61 (YLAY…LSIL), 104–124 (MTAV…SNID), 143–163 (FSMY…SIAV), 185–205 (FLRW…YFLV), 217–237 (IGAA…AFYI), and 249–269 (ALAA…IVLI).

The protein belongs to the UPF0761 family.

The protein localises to the cell inner membrane. The protein is UPF0761 membrane protein VIBHAR_00593 of Vibrio campbellii (strain ATCC BAA-1116).